A 995-amino-acid chain; its full sequence is uncharacterized protein (995 aa).

This is an uncharacterized protein from Caenorhabditis elegans.